A 130-amino-acid chain; its full sequence is Small ribosomal subunit protein uS8 (130 aa).

This sequence belongs to the universal ribosomal protein uS8 family.

This is Small ribosomal subunit protein uS8 (RPS22) from Candida glabrata (strain ATCC 2001 / BCRC 20586 / JCM 3761 / NBRC 0622 / NRRL Y-65 / CBS 138) (Yeast).